Here is a 350-residue protein sequence, read N- to C-terminus: Ion-translocating oxidoreductase complex subunit D (350 aa).

Transmembrane regions (helical) follow at residues 37 to 57 (YFFG…ALTA), 68 to 88 (AVLS…IGVA), 89 to 109 (IPPI…IVLV), and 120 to 140 (IFNP…VQMT). Thr-185 is modified (FMN phosphoryl threonine). 5 consecutive transmembrane segments (helical) span residues 212–232 (GYGV…LIML), 239–259 (WHIS…GYLL), 265–285 (VGPL…FIAT), 291–311 (ATSV…VYVI), and 315–335 (GGYP…APFI).

It belongs to the NqrB/RnfD family. In terms of assembly, the complex is composed of six subunits: RnfA, RnfB, RnfC, RnfD, RnfE and RnfG. It depends on FMN as a cofactor.

It localises to the cell inner membrane. Functionally, part of a membrane-bound complex that couples electron transfer with translocation of ions across the membrane. This Shewanella pealeana (strain ATCC 700345 / ANG-SQ1) protein is Ion-translocating oxidoreductase complex subunit D.